Consider the following 505-residue polypeptide: Outer capsid protein VP5 (505 aa).

The segment at 1 to 42 (MGKFTSFLKRAGNATKRALTSDSAKKMYKLAGKTLQRVVESE) is involved in membrane permeabilization.

It belongs to the orbivirus VP5 family.

Its subcellular location is the virion. Functionally, VP5 protein is one of the two proteins (with VP2) which constitute the virus particle outer capsid. Acts as a membrane permeabilization protein that mediates release of viral particles from endosomal compartments into the cytoplasm. Permeabilization activity is probably negatively regulated by VP2 and is triggered by endosomal degradation of VP2 and exposure to low pH. This African horse sickness virus (AHSV) protein is Outer capsid protein VP5 (Segment-6).